Reading from the N-terminus, the 260-residue chain is Intermembrane phospholipid transport system permease protein MlaE (260 aa).

Over 1-50 (MLLNALASLGHKGIKTLRTFGRAGLMLFNALVGKPEFRKHAPLLVRQLYN) the chain is Cytoplasmic. Residues 51–71 (VGVLSMLIIVVSGVFIGMVLG) form a helical membrane-spanning segment. The Periplasmic portion of the chain corresponds to 72-88 (LQGYLVLTTYSAETSLG). The chain crosses the membrane as a helical span at residues 89–109 (MLVALSLLRELGPVVAALLFA). The Cytoplasmic portion of the chain corresponds to 110–147 (GRAGSALTAEIGLMRATEQLSSMEMMAVDPLRRVISPR). The helical transmembrane segment at 148 to 168 (FWAGVISLPLLTVIFVAVGIW) threads the bilayer. Over 169-198 (GGSLVGVSWKGIDSGFFWSAMQNAVDWRMD) the chain is Periplasmic. A helical transmembrane segment spans residues 199–219 (LVNCLIKSVVFAITVTWISLF). Topologically, residues 220–238 (NGYDAIPTSAGISRATTRT) are cytoplasmic. A helical transmembrane segment spans residues 239–259 (VVHSSLAVLGLDFVLTALMFG). Residue asparagine 260 is a topological domain, periplasmic.

Belongs to the MlaE permease family. As to quaternary structure, the complex is composed of two ATP-binding proteins (MlaF), two transmembrane proteins (MlaE), two cytoplasmic solute-binding proteins (MlaB) and six periplasmic solute-binding proteins (MlaD).

The protein localises to the cell inner membrane. Part of the ABC transporter complex MlaFEDB, which is involved in a phospholipid transport pathway that maintains lipid asymmetry in the outer membrane by retrograde trafficking of phospholipids from the outer membrane to the inner membrane. Probably responsible for the translocation of the substrate across the membrane. In Escherichia coli O157:H7, this protein is Intermembrane phospholipid transport system permease protein MlaE.